We begin with the raw amino-acid sequence, 662 residues long: Acetyl-coenzyme A synthetase (662 aa).

CoA contacts are provided by residues 197–200 and Thr-317; that span reads RKGK. Residues 393–395, 417–422, Asp-510, and Arg-525 each bind ATP; these read GEP and DTWWQT. CoA is bound at residue Ser-533. Arg-536 is an ATP binding site. 2 residues coordinate Mg(2+): His-549 and Val-552. The residue at position 623 (Lys-623) is an N6-acetyllysine.

This sequence belongs to the ATP-dependent AMP-binding enzyme family. The cofactor is Mg(2+). In terms of processing, acetylated. Deacetylation by the SIR2-homolog deacetylase activates the enzyme.

It carries out the reaction acetate + ATP + CoA = acetyl-CoA + AMP + diphosphate. Catalyzes the conversion of acetate into acetyl-CoA (AcCoA), an essential intermediate at the junction of anabolic and catabolic pathways. AcsA undergoes a two-step reaction. In the first half reaction, AcsA combines acetate with ATP to form acetyl-adenylate (AcAMP) intermediate. In the second half reaction, it can then transfer the acetyl group from AcAMP to the sulfhydryl group of CoA, forming the product AcCoA. This is Acetyl-coenzyme A synthetase from Helicobacter pylori (strain P12).